A 66-amino-acid polypeptide reads, in one-letter code: Conotoxin mr5.2 (66 aa).

The first 19 residues, 1-19 (MRCVPVFVILLLLIASAPT), serve as a signal peptide directing secretion. The propeptide occupies 20-48 (VDAQLKTKDDMPLASFHANVKRTLQILRD). A 4-carboxyglutamate mark is found at Glu-57 and Glu-61. At Asn-65 the chain carries Asparagine amide.

In terms of processing, contains 2 disulfide bonds that can be either 'C1-C3, C2-C4' or 'C1-C4, C2-C3', since these disulfide connectivities have been observed for conotoxins with cysteine framework V (for examples, see AC P0DQQ7 and AC P81755). Expressed by the venom duct.

The protein localises to the secreted. In Conus marmoreus (Marble cone), this protein is Conotoxin mr5.2.